Here is a 91-residue protein sequence, read N- to C-terminus: Alpha-latrotoxin associated low molecular weight protein SGV150-311 (91 aa).

Residues 1 to 18 (MNVLHFLILLMSVVSVFC) form the signal peptide.

It belongs to the arthropod CHH/MIH/GIH/VIH hormone family. As to expression, expressed by the venom gland.

It localises to the secreted. Its function is as follows. May increase the toxicity of alpha-latrotoxin and/or other venom components. Is non-toxic to mice and to the cockroach Periplaneta americana. This is Alpha-latrotoxin associated low molecular weight protein SGV150-311 from Steatoda grossa (False black widow).